Consider the following 498-residue polypeptide: Protein adenylyltransferase Fic (498 aa).

The helical transmembrane segment at 43-63 (FAFLAFLAGSFLAFSLHALIS) threads the bilayer. TPR repeat units lie at residues 126–159 (ALSS…APRH) and 160–194 (PEVL…NPSH). The short motif at 251–256 (SVGIEG) is the Inhibitory (S/T)XXXE(G/N) motif element. ATP-binding positions include Glu-255 and 336–339 (VGGH). The region spanning 305–440 (ITIKDILELH…IRPFVRFIAD (136 aa)) is the Fido domain. His-383 is an active-site residue. ATP contacts are provided by residues 387-394 (DGNGRTSR), 419-420 (YY), and Asn-427.

The protein belongs to the fic family. As to quaternary structure, homodimer.

Its subcellular location is the membrane. It carries out the reaction L-tyrosyl-[protein] + ATP = O-(5'-adenylyl)-L-tyrosyl-[protein] + diphosphate. The enzyme catalyses L-threonyl-[protein] + ATP = 3-O-(5'-adenylyl)-L-threonyl-[protein] + diphosphate. The catalysed reaction is 3-O-(5'-adenylyl)-L-threonyl-[protein] + H2O = L-threonyl-[protein] + AMP + H(+). With respect to regulation, the side chain of Glu-255 determines which of the two opposing activities (AMPylase or de-AMPylase) will take place. In response to endoplasmic reticulum stress, mediates de-AMPylase activity. Adenylyltransferase activity is inhibited by the inhibitory helix present at the N-terminus: Glu-255 binds ATP and competes with ATP-binding at Arg-394, thereby preventing adenylyltransferase activity. In unstressed cells, disengagement of Glu-255 promotes adenylyltransferase activity. Activation dissociates ATP-binding from Glu-255, allowing ordered binding of the entire ATP moiety with the alpha-phosphate in an orientation that is productive for accepting an incoming target hydroxyl side chain. Functionally, protein that can both mediate the addition of adenosine 5'-monophosphate (AMP) to specific residues of target proteins (AMPylation), and the removal of the same modification from target proteins (de-AMPylation), depending on the context. The side chain of Glu-255 determines which of the two opposing activities (AMPylase or de-AMPylase) will take place. Acts as a key regulator of the unfolded protein response (UPR) by mediating AMPylation or de-AMPylation of Hsc70-3/BiP. In unstressed cells, acts as an adenylyltransferase by mediating AMPylation of Hsc70-3/BiP at 'Thr-518', thereby inactivating it. In response to endoplasmic reticulum stress, acts as a phosphodiesterase by mediating removal of ATP (de-AMPylation) from Hsc70-3/BiP at 'Thr-518', leading to restore HSPA5/BiP activity. The chain is Protein adenylyltransferase Fic from Drosophila willistoni (Fruit fly).